Consider the following 116-residue polypeptide: uncharacterized protein (116 aa).

2 consecutive transmembrane segments (helical) span residues 24–44 (VPFA…VLTA) and 70–90 (VILT…IILS).

Its subcellular location is the membrane. This is an uncharacterized protein from Saccharomyces cerevisiae (strain ATCC 204508 / S288c) (Baker's yeast).